Consider the following 87-residue polypeptide: Xibalbin-2 (87 aa).

A signal peptide spans 1-25; that stretch reads MKGVCTRKVLYFFMAVILFVAIVAS. The propeptide occupies 26-45; it reads EDTENRNPAMAMPLQRMEQE.

Belongs to the xibalbin-2 family. Post-translationally, contains 5 disulfide bonds. As to expression, expressed by the venom gland. Not found in the whole body.

It localises to the secreted. Probable neurotoxin. Moderately inhibits voltage-gated potassium channels (Kv1.1/KCNA1, Kv1.2/KCNA2, Kv1.3/KCNA3, and Kv1.6/KCNA6, with the highest toxicity against Kv1.6 (73.2% inhibition at 1 uM)) and weakly inhibits sodium channels (Nav1.4/SCN4A). Does not activate protein kinase A type II (PKA-II) and MAP kinase Erk1/2 in sensory neurons. Does not show cytotoxic activity. Does not have an impact on Ca2+, cAMP, and NO signaling in the cell types analyzed. Does not interfere with the adhesion of leukocytes to endothelial cells. Its function is as follows. Moderately inhibits voltage-gated potassium channels (Kv1.1/KCNA1, Kv1.2/KCNA2, Kv1.3/KCNA3, and Kv1.6/KCNA6, with the highest toxicity against Kv1.6 (75.9% inhibition at 1 uM)). Does not activate protein kinase A type II (PKA-II) and MAP kinase Erk1/2 in sensory neurons. Does not show cytotoxic activity. Does not have an impact on Ca2+, cAMP, and NO signaling in the cell types analyzed. Does not interfere with the adhesion of leukocytes to endothelial cells. In Xibalbanus tulumensis (Blind cave remipede), this protein is Xibalbin-2.